The chain runs to 42 residues: Aryl-alcohol dehydrogenase (42 aa).

It belongs to the zinc-containing alcohol dehydrogenase family. As to quaternary structure, homodimer. Zn(2+) serves as cofactor.

It carries out the reaction an aromatic primary alcohol + NAD(+) = an aromatic aldehyde + NADH + H(+). Oxidizes primary alcohols with an aromatic or cyclohex-1-ene ring. It is highly specific for benzyl alcohol. This Acinetobacter guillouiae (Acinetobacter genomosp. 11) protein is Aryl-alcohol dehydrogenase.